A 176-amino-acid chain; its full sequence is Inner membrane-spanning protein YciB (176 aa).

The next 6 helical transmembrane spans lie at 3–23, 24–44, 49–69, 72–92, 121–141, and 149–169; these read FLFD…WGIF, TATA…AFRH, TMLW…LVLH, KFIQ…LLAA, VAWA…VHNF, and FKLF…SLWL.

Belongs to the YciB family.

Its subcellular location is the cell inner membrane. Its function is as follows. Plays a role in cell envelope biogenesis, maintenance of cell envelope integrity and membrane homeostasis. The protein is Inner membrane-spanning protein YciB of Burkholderia orbicola (strain MC0-3).